The sequence spans 1438 residues: Pyochelin synthetase PchE (1438 aa).

Positions 6–85 constitute a Carrier 1 domain; sequence DSRTALRDWL…AWLDLLACAD (80 aa). An O-(pantetheine 4'-phosphoryl)serine modification is found at serine 46. The condensation/cyclization stretch occupies residues 136–442; sequence RTRDVDPQRL…ARRQGQPRSA (307 aa). Positions 563–950 are adenylation; that stretch reads RAAEAPDADA…GRVDQQVKVR (388 aa). The Carrier 2 domain maps to 1350 to 1425; the sequence is EPLEAHEQAL…GLARHLQAQT (76 aa). Residue serine 1385 is modified to O-(pantetheine 4'-phosphoryl)serine.

This sequence belongs to the NRP synthetase family. Requires pantetheine 4'-phosphate as cofactor.

It catalyses the reaction holo-[peptidyl-carrier protein] + L-cysteine + ATP = L-cysteinyl-[peptidyl-carrier protein] + AMP + diphosphate. The protein operates within siderophore biosynthesis. It functions in the pathway antifungal biosynthesis. Involved in the biosynthesis of the siderophore pyochelin. Accepts salicylate activated by PchD at the first peptidyl carrier domain (ArCP), and activates and fixes one molecule of cysteine at the second peptidyl carrier domain (PCP1) via a thioester linkage to the phosphopanthetheine moiety. Then catalyzes the condensation reaction between the salicylate bound to the first site and the cysteine bound to the second site, and the cyclization of the cysteine to form the salicyl-thiazolinyl-S-PCP1 intermediate at the second site. When this intermediate is released by the action of a thioesterase, it produces the antifungal antibiotic dihydroaeruginoic acid (Dha or hydroxyphenyl-thiazolinyl-carboxylate). The sequence is that of Pyochelin synthetase PchE from Pseudomonas aeruginosa (strain UCBPP-PA14).